The sequence spans 385 residues: Multidrug resistance protein MdtE (385 aa).

An N-terminal signal peptide occupies residues 1–20 (MNRRRKLLIPLLFCGAMLTA). A lipid anchor (N-palmitoyl cysteine) is attached at Cys21. Cys21 carries the S-diacylglycerol cysteine lipid modification.

Belongs to the membrane fusion protein (MFP) (TC 8.A.1) family. As to quaternary structure, homotrimer. Part of the tripartite efflux system MdtEF-TolC, which is composed of an inner membrane transporter, MdtF, a membrane fusion protein, MdtE, and an outer membrane component, TolC. The complex forms a large protein conduit and can translocate molecules across both the inner and outer membranes.

The protein localises to the cell inner membrane. Part of the tripartite efflux system MdtEF-TolC, which confers resistance to various compounds. In Escherichia coli O157:H7, this protein is Multidrug resistance protein MdtE (mdtE).